The primary structure comprises 1939 residues: Myosin-4 (1939 aa).

The Myosin N-terminal SH3-like domain maps to 33-82; it reads DAKTSVFVVDPKESYVKAIVQSREGGKVTAKTEAGATVTVKEDQVFSMNP. Residues Thr64 and Thr69 each carry the phosphothreonine modification. At Ser79 the chain carries Phosphoserine. One can recognise a Myosin motor domain in the interval 86 to 782; that stretch reads DKIEDMAMMT…LLGTLEEMRD (697 aa). The residue at position 130 (Lys130) is an N6,N6,N6-trimethyllysine. Residue 179-186 participates in ATP binding; sequence GESGAGKT. A Phosphotyrosine modification is found at Tyr389. At Thr391 the chain carries Phosphothreonine. The residue at position 392 (Ser392) is a Phosphoserine. A Phosphothreonine modification is found at Thr419. Tyr424 carries the post-translational modification Phosphotyrosine. Ser625 carries the phosphoserine modification. Positions 659 to 681 are actin-binding; that stretch reads LNKLMTNLRSTHPHFVRCIIPNE. His757 carries the post-translational modification Pros-methylhistidine. The interval 761-775 is actin-binding; it reads KFGHTKVFFKAGLLG. Thr776 carries the post-translational modification Phosphothreonine. Positions 785-814 constitute an IQ domain; sequence LAQLITRTQAICRGFLMRVEFRKMMERRES. Positions 843–1939 form a coiled coil; sequence LLKSAETEKE…EVHTKVISEE (1097 aa). Phosphoserine occurs at positions 1092, 1162, and 1237. Thr1241 carries the phosphothreonine modification. Ser1243 carries the phosphoserine modification. Phosphothreonine is present on Thr1255. At Ser1261 the chain carries Phosphoserine. Thr1265 bears the Phosphothreonine mark. The residue at position 1278 (Ser1278) is a Phosphoserine. Residue Thr1286 is modified to Phosphothreonine. 5 positions are modified to phosphoserine: Ser1288, Ser1292, Ser1303, Ser1306, and Ser1413. Position 1464 is a phosphotyrosine (Tyr1464). Thr1467 is modified (phosphothreonine). The residue at position 1474 (Ser1474) is a Phosphoserine. Tyr1492 is subject to Phosphotyrosine. A Phosphoserine modification is found at Ser1495. Phosphothreonine is present on Thr1501. Ser1514 carries the post-translational modification Phosphoserine. A Phosphothreonine modification is found at Thr1517. Residues Ser1542, Ser1547, Ser1554, Ser1574, Ser1600, Ser1603, Ser1714, and Ser1726 each carry the phosphoserine modification. 2 positions are modified to phosphothreonine: Thr1730 and Thr1736. At Ser1739 the chain carries Phosphoserine.

Belongs to the TRAFAC class myosin-kinesin ATPase superfamily. Myosin family. As to quaternary structure, muscle myosin is a hexameric protein that consists of 2 heavy chain subunits (MHC), 2 alkali light chain subunits (MLC) and 2 regulatory light chain subunits (MLC-2).

The protein resides in the cytoplasm. Its subcellular location is the myofibril. Muscle contraction. The sequence is that of Myosin-4 (MYH4) from Homo sapiens (Human).